The sequence spans 296 residues: Cholesterol ring-cleaving hydrolase IpdA subunit (296 aa).

It belongs to the 3-oxoacid CoA-transferase subunit A family. In terms of assembly, heterotetramer composed of 2 IpdA subunits and 2 IpdB subunits.

It carries out the reaction (3E)-2-(2-carboxylatoethyl)-3-methyl-6-oxocyclohex-1-ene-1-carboxyl-CoA + H2O = 6-methyl-3,7-dioxodecanedioyl-CoA. It participates in steroid metabolism; cholesterol degradation. In terms of biological role, involved in the final steps of cholesterol and steroid degradation. Opens the last steroid ring of cholesterol by catalyzing the hydrolysis of (3E)-2-(2-carboxylatoethyl)-3-methyl-6-oxocyclohex-1-ene-1-carboxyl-CoA (COCHEA-CoA) to 6-methyl-3,7-dioxodecanedioyl-CoA (MeDODA-CoA). The chain is Cholesterol ring-cleaving hydrolase IpdA subunit from Rhodococcus jostii (strain RHA1).